A 328-amino-acid chain; its full sequence is tRNA-modifying protein YgfZ (328 aa).

Residues Trp28 and Trp190 each contribute to the folate site.

The protein belongs to the tRNA-modifying YgfZ family.

The protein resides in the cytoplasm. Functionally, folate-binding protein involved in regulating the level of ATP-DnaA and in the modification of some tRNAs. It is probably a key factor in regulatory networks that act via tRNA modification, such as initiation of chromosomal replication. The polypeptide is tRNA-modifying protein YgfZ (Sodalis glossinidius (strain morsitans)).